Consider the following 356-residue polypeptide: Butyrate kinase (356 aa).

This sequence belongs to the acetokinase family.

It localises to the cytoplasm. It carries out the reaction butanoate + ATP = butanoyl phosphate + ADP. The protein operates within lipid metabolism; butanoate metabolism. Functionally, catalyzes the conversion of butyryl-CoA through butyryl phosphate to butyrate. The protein is Butyrate kinase (buk) of Clostridium perfringens (strain 13 / Type A).